Reading from the N-terminus, the 195-residue chain is Small ribosomal subunit protein uS4c (195 aa).

Residues 82–143 form the S4 RNA-binding domain; the sequence is MRLDNILFRL…KQRSKALIQN (62 aa).

It belongs to the universal ribosomal protein uS4 family. In terms of assembly, part of the 30S ribosomal subunit. Contacts protein S5. The interaction surface between S4 and S5 is involved in control of translational fidelity.

Its subcellular location is the plastid. It is found in the chloroplast. Its function is as follows. One of the primary rRNA binding proteins, it binds directly to 16S rRNA where it nucleates assembly of the body of the 30S subunit. With S5 and S12 plays an important role in translational accuracy. The protein is Small ribosomal subunit protein uS4c (rps4) of Gladiolus murielae (Abyssinian gladiolus).